Here is a 270-residue protein sequence, read N- to C-terminus: 3-methyl-2-oxobutanoate hydroxymethyltransferase (270 aa).

Positions 50 and 89 each coordinate Mg(2+). 3-methyl-2-oxobutanoate is bound by residues D50–S51, D89, and K118. Residue E120 coordinates Mg(2+). Catalysis depends on E187, which acts as the Proton acceptor.

The protein belongs to the PanB family. In terms of assembly, homodecamer; pentamer of dimers. It depends on Mg(2+) as a cofactor.

The protein localises to the cytoplasm. The enzyme catalyses 3-methyl-2-oxobutanoate + (6R)-5,10-methylene-5,6,7,8-tetrahydrofolate + H2O = 2-dehydropantoate + (6S)-5,6,7,8-tetrahydrofolate. It functions in the pathway cofactor biosynthesis; (R)-pantothenate biosynthesis; (R)-pantoate from 3-methyl-2-oxobutanoate: step 1/2. Catalyzes the reversible reaction in which hydroxymethyl group from 5,10-methylenetetrahydrofolate is transferred onto alpha-ketoisovalerate to form ketopantoate. The sequence is that of 3-methyl-2-oxobutanoate hydroxymethyltransferase from Helicobacter pylori (strain ATCC 700392 / 26695) (Campylobacter pylori).